The chain runs to 346 residues: FAS-associated factor 2 (346 aa).

Lys-68 is subject to N6-acetyllysine. A coiled-coil region spans residues 176-251; it reads SERLEREERN…EEKERKLECL (76 aa). Residues 200-262 are disordered; that stretch reads ASLRADQEKE…PEPSPDDPDS (63 aa). A compositionally biased stretch (basic and acidic residues) spans 204–249; the sequence is ADQEKERKKREERERKRRKEEEVQQQKLAEERRRQNLQEEKERKLE. The UBX domain occupies 258–340; that stretch reads DDPDSVKIIF…GLSHTEVLFV (83 aa).

In terms of assembly, identified in a complex that contains SEL1L, OS9, FAF2/UBXD8, UBE2J1/UBC6E and AUP1. Interacts with YOD1. Interacts (via N-terminus) with UBQLN2 (via C-terminus). Interacts with PNPLA2 and UBAC2. Interacts with ZFAND2B; probably through VCP. Interacts with LMBR1L.

It is found in the cytoplasm. The protein localises to the lipid droplet. It localises to the endoplasmic reticulum. Functionally, plays an important role in endoplasmic reticulum-associated degradation (ERAD) that mediates ubiquitin-dependent degradation of misfolded endoplasmic reticulum proteins. By controlling the steady-state expression of the IGF1R receptor, indirectly regulates the insulin-like growth factor receptor signaling pathway. Involved in inhibition of lipid droplet degradation by binding to phospholipase PNPL2 and inhibiting its activity by promoting dissociation of PNPL2 from its endogenous activator, ABHD5 which inhibits the rate of triacylglycerol hydrolysis. Involved in stress granule disassembly: associates with ubiquitinated G3BP1 in response to heat shock, thereby promoting interaction between ubiquitinated G3BP1 and VCP, followed by G3BP1 extraction from stress granules and stress granule disassembly. This is FAS-associated factor 2 (Faf2) from Rattus norvegicus (Rat).